We begin with the raw amino-acid sequence, 365 residues long: Methylthioribose-1-phosphate isomerase (365 aa).

Substrate is bound by residues 53–55 (RGA), R90, and Q201. D242 acts as the Proton donor in catalysis. Residue 252 to 253 (NK) coordinates substrate.

It belongs to the eIF-2B alpha/beta/delta subunits family. MtnA subfamily.

It carries out the reaction 5-(methylsulfanyl)-alpha-D-ribose 1-phosphate = 5-(methylsulfanyl)-D-ribulose 1-phosphate. It participates in amino-acid biosynthesis; L-methionine biosynthesis via salvage pathway; L-methionine from S-methyl-5-thio-alpha-D-ribose 1-phosphate: step 1/6. In terms of biological role, catalyzes the interconversion of methylthioribose-1-phosphate (MTR-1-P) into methylthioribulose-1-phosphate (MTRu-1-P). This Methylorubrum populi (strain ATCC BAA-705 / NCIMB 13946 / BJ001) (Methylobacterium populi) protein is Methylthioribose-1-phosphate isomerase.